Here is a 764-residue protein sequence, read N- to C-terminus: Bifunctional type I diterpene synthase tndC (764 aa).

The terpene cyclase stretch occupies residues 1-324; that stretch reads MEYRYSTVVD…CPRYHPWSSY (324 aa). Positions 92 and 96 each coordinate Mg(2+). The short motif at 92–96 is the DDXXD 1 element; sequence DDVTD. Residues 224-232 carry the NSE/DTE motif; sequence NDLYSWQKE. The interval 325–761 is prenyltransferase; sequence NERQLDWMKN…FQLRLILEML (437 aa). The disordered stretch occupies residues 377-403; it reads AVNGNGASHTSSIKGSTGGNGVTHSPV. A compositionally biased stretch (polar residues) spans 381 to 391; that stretch reads NGASHTSSIKG. 3 residues coordinate isopentenyl diphosphate: lysine 484, arginine 487, and histidine 516. Mg(2+)-binding residues include aspartate 523 and aspartate 527. The short motif at 523–527 is the DDXXD 2 element; the sequence is DDLED. Arginine 532 is a binding site for dimethylallyl diphosphate. Arginine 533 is a binding site for isopentenyl diphosphate. Residues lysine 610, threonine 611, glutamine 646, asparagine 653, lysine 663, and lysine 673 each coordinate dimethylallyl diphosphate.

This sequence in the N-terminal section; belongs to the terpene synthase family. The protein in the C-terminal section; belongs to the FPP/GGPP synthase family.

It catalyses the reaction isopentenyl diphosphate + (2E,6E)-farnesyl diphosphate = (2E,6E,10E)-geranylgeranyl diphosphate + diphosphate. The enzyme catalyses (2E,6E,10E)-geranylgeranyl diphosphate = talarodiene + diphosphate. It participates in secondary metabolite biosynthesis; terpenoid biosynthesis. Bifunctional type I diterpene synthase; part of the gene cluster that mediates the biosynthesis of talaronoid C, a fusicoccane diterpenoid with an unprecedented tricyclic 5/8/6 ring system. The first step in the pathway is performed by the fusicoccadiene synthase tndC that possesses both prenyl transferase and terpene cyclase activity, converting isopentenyl diphosphate and dimethylallyl diphosphate into geranylgeranyl diphosphate (GGDP) and further converting GGDP into talarodiene, a precursor for talaronoid C. The remaining enzymes from the cluster include the cytochrome P450 monooxygenase tndB, the aldehyde reductase tndE and the alcohol dehydrogenase tndF that are involved in the conversion of talarodiene into talaronoid C. In Aspergillus flavipes, this protein is Bifunctional type I diterpene synthase tndC.